Here is a 179-residue protein sequence, read N- to C-terminus: uncharacterized protein (179 aa).

This is an uncharacterized protein from Encephalitozoon cuniculi (strain GB-M1) (Microsporidian parasite).